The sequence spans 229 residues: Putative N-acetylmannosamine-6-phosphate 2-epimerase (229 aa).

It belongs to the NanE family.

It carries out the reaction an N-acyl-D-glucosamine 6-phosphate = an N-acyl-D-mannosamine 6-phosphate. It functions in the pathway amino-sugar metabolism; N-acetylneuraminate degradation; D-fructose 6-phosphate from N-acetylneuraminate: step 3/5. Converts N-acetylmannosamine-6-phosphate (ManNAc-6-P) to N-acetylglucosamine-6-phosphate (GlcNAc-6-P). The protein is Putative N-acetylmannosamine-6-phosphate 2-epimerase of Escherichia coli O127:H6 (strain E2348/69 / EPEC).